Consider the following 355-residue polypeptide: UDP-N-acetylglucosamine--N-acetylmuramyl-(pentapeptide) pyrophosphoryl-undecaprenol N-acetylglucosamine transferase (355 aa).

Residues 13 to 15 (TGG), asparagine 125, arginine 162, serine 190, isoleucine 244, and glutamine 289 contribute to the UDP-N-acetyl-alpha-D-glucosamine site.

It belongs to the glycosyltransferase 28 family. MurG subfamily.

It is found in the cell inner membrane. The enzyme catalyses di-trans,octa-cis-undecaprenyl diphospho-N-acetyl-alpha-D-muramoyl-L-alanyl-D-glutamyl-meso-2,6-diaminopimeloyl-D-alanyl-D-alanine + UDP-N-acetyl-alpha-D-glucosamine = di-trans,octa-cis-undecaprenyl diphospho-[N-acetyl-alpha-D-glucosaminyl-(1-&gt;4)]-N-acetyl-alpha-D-muramoyl-L-alanyl-D-glutamyl-meso-2,6-diaminopimeloyl-D-alanyl-D-alanine + UDP + H(+). It participates in cell wall biogenesis; peptidoglycan biosynthesis. In terms of biological role, cell wall formation. Catalyzes the transfer of a GlcNAc subunit on undecaprenyl-pyrophosphoryl-MurNAc-pentapeptide (lipid intermediate I) to form undecaprenyl-pyrophosphoryl-MurNAc-(pentapeptide)GlcNAc (lipid intermediate II). In Neisseria meningitidis serogroup B (strain ATCC BAA-335 / MC58), this protein is UDP-N-acetylglucosamine--N-acetylmuramyl-(pentapeptide) pyrophosphoryl-undecaprenol N-acetylglucosamine transferase.